A 211-amino-acid polypeptide reads, in one-letter code: Protein CHLORORESPIRATORY REDUCTION 41, chloroplastic (211 aa).

The transit peptide at 1 to 38 (MASTSTLLLPSLSSKNLHIAVPIRTNSFVRRTTKFSTK) directs the protein to the chloroplast. Positions 136 to 163 (AKAGEIVAERAREEAEVLRDEGKVEERM) form a coiled coil.

In terms of assembly, biogenesis factor component of the plastidial NDH subcomplex A.

It localises to the plastid. The protein localises to the chloroplast. It is found in the chloroplast stroma. Its function is as follows. Required for both formation and activity of the chloroplast NAD(P)H dehydrogenase (NDH) complex of the photosynthetic electron transport chain. Functions in assembly or stabilization of the NDH complex; probably involved, together with NdhO and NdhH, in the formation of an NDH subcomplex A assembly intermediate (NAI500). This is Protein CHLORORESPIRATORY REDUCTION 41, chloroplastic from Arabidopsis thaliana (Mouse-ear cress).